We begin with the raw amino-acid sequence, 438 residues long: Myosin light chain kinase, smooth muscle (438 aa).

One can recognise a Protein kinase domain in the interval 1-241; sequence FRLVEKKTGK…CTQCLQHPWL (241 aa). Lys-15 contacts ATP. At Tyr-97 the chain carries Phosphotyrosine; by ABL1. Asp-107 acts as the Proton acceptor in catalysis. Tyr-157 carries the phosphotyrosine; by ABL1 modification. The calmodulin-binding stretch occupies residues 233–296; that stretch reads TQCLQHPWLX…SGLSGRKSST (64 aa). Ser-281, Ser-282, Ser-294, Ser-295, and Ser-298 each carry phosphoserine. A telokin region spans residues 283–438; the sequence is MAMISGLSGR…GEGGEEEEEE (156 aa). The segment at 289-309 is disordered; it reads LSGRKSSTGSPTSPLNAEKLE. The segment covering 292-303 has biased composition (polar residues); sequence RKSSTGSPTSPL. The residue at position 300 (Thr-300) is a Phosphothreonine. Ser-301 is subject to Phosphoserine. The region spanning 331–420 is the Ig-like C2-type domain; sequence PYFSKTIRDL…GEATCTAELI (90 aa). Cys-352 and Cys-404 are disulfide-bonded.

This sequence belongs to the protein kinase superfamily. CAMK Ser/Thr protein kinase family. In terms of assembly, all isoforms including Telokin bind calmodulin. Interacts with SVIL. Interacts with CTTN; this interaction is reduced during thrombin-induced endothelial cell (EC) contraction but is promoted by the barrier-protective agonist sphingosine 1-phosphate (S1P) within lamellipodia. A complex made of ABL1, CTTN and MYLK regulates cortical actin-based cytoskeletal rearrangement critical to sphingosine 1-phosphate (S1P)-mediated endothelial cell (EC) barrier enhancement. Binds to NAA10/ARD1 and PTK2B/PYK2. Mg(2+) is required as a cofactor. The cofactor is Ca(2+). The C-terminus is deglutamylated by AGTPBP1/CCP1, AGBL1/CCP4 and AGBL4/CCP6, leading to the formation of Myosin light chain kinase, smooth muscle, deglutamylated form. The consequences of C-terminal deglutamylation are unknown. In terms of processing, can probably be down-regulated by phosphorylation. Tyrosine phosphorylation by ABL1 increases kinase activity, reverses MLCK-mediated inhibition of Arp2/3-mediated actin polymerization, and enhances CTTN-binding. Phosphorylation by SRC promotes CTTN binding.

The protein resides in the cytoplasm. It is found in the cell projection. Its subcellular location is the lamellipodium. The protein localises to the cleavage furrow. It localises to the cytoskeleton. The protein resides in the stress fiber. The catalysed reaction is L-seryl-[myosin light chain] + ATP = O-phospho-L-seryl-[myosin light chain] + ADP + H(+). The enzyme catalyses L-threonyl-[myosin light chain] + ATP = O-phospho-L-threonyl-[myosin light chain] + ADP + H(+). Functionally, calcium/calmodulin-dependent myosin light chain kinase implicated in smooth muscle contraction via phosphorylation of myosin light chains (MLC). Also regulates actin-myosin interaction through a non-kinase activity. Phosphorylates PTK2B/PYK2 and myosin light-chains. Involved in the inflammatory response (e.g. apoptosis, vascular permeability, leukocyte diapedesis), cell motility and morphology, airway hyperreactivity and other activities relevant to asthma. Required for tonic airway smooth muscle contraction that is necessary for physiological and asthmatic airway resistance. Necessary for gastrointestinal motility. Implicated in the regulation of endothelial as well as vascular permeability, probably via the regulation of cytoskeletal rearrangements. In the nervous system it has been shown to control the growth initiation of astrocytic processes in culture and to participate in transmitter release at synapses formed between cultured sympathetic ganglion cells. Critical participant in signaling sequences that result in fibroblast apoptosis. Plays a role in the regulation of epithelial cell survival. Required for epithelial wound healing, especially during actomyosin ring contraction during purse-string wound closure. Mediates RhoA-dependent membrane blebbing. Triggers TRPC5 channel activity in a calcium-dependent signaling, by inducing its subcellular localization at the plasma membrane. Promotes cell migration (including tumor cells) and tumor metastasis. PTK2B/PYK2 activation by phosphorylation mediates ITGB2 activation and is thus essential to trigger neutrophil transmigration during acute lung injury (ALI). May regulate optic nerve head astrocyte migration. Probably involved in mitotic cytoskeletal regulation. Regulates tight junction probably by modulating ZO-1 exchange in the perijunctional actomyosin ring. Mediates burn-induced microvascular barrier injury; triggers endothelial contraction in the development of microvascular hyperpermeability by phosphorylating MLC. Essential for intestinal barrier dysfunction. Mediates Giardia spp.-mediated reduced epithelial barrier function during giardiasis intestinal infection via reorganization of cytoskeletal F-actin and tight junctional ZO-1. Necessary for hypotonicity-induced Ca(2+) entry and subsequent activation of volume-sensitive organic osmolyte/anion channels (VSOAC) in cervical cancer cells. This is Myosin light chain kinase, smooth muscle (MYLK) from Ovis aries (Sheep).